A 379-amino-acid chain; its full sequence is Cobalt-precorrin-5B C(1)-methyltransferase (379 aa).

It belongs to the CbiD family.

The catalysed reaction is Co-precorrin-5B + S-adenosyl-L-methionine = Co-precorrin-6A + S-adenosyl-L-homocysteine. Its pathway is cofactor biosynthesis; adenosylcobalamin biosynthesis; cob(II)yrinate a,c-diamide from sirohydrochlorin (anaerobic route): step 6/10. In terms of biological role, catalyzes the methylation of C-1 in cobalt-precorrin-5B to form cobalt-precorrin-6A. This chain is Cobalt-precorrin-5B C(1)-methyltransferase, found in Salmonella choleraesuis (strain SC-B67).